A 149-amino-acid chain; its full sequence is SsrA-binding protein (149 aa).

The protein belongs to the SmpB family.

The protein resides in the cytoplasm. Required for rescue of stalled ribosomes mediated by trans-translation. Binds to transfer-messenger RNA (tmRNA), required for stable association of tmRNA with ribosomes. tmRNA and SmpB together mimic tRNA shape, replacing the anticodon stem-loop with SmpB. tmRNA is encoded by the ssrA gene; the 2 termini fold to resemble tRNA(Ala) and it encodes a 'tag peptide', a short internal open reading frame. During trans-translation Ala-aminoacylated tmRNA acts like a tRNA, entering the A-site of stalled ribosomes, displacing the stalled mRNA. The ribosome then switches to translate the ORF on the tmRNA; the nascent peptide is terminated with the 'tag peptide' encoded by the tmRNA and targeted for degradation. The ribosome is freed to recommence translation, which seems to be the essential function of trans-translation. This is SsrA-binding protein from Fervidobacterium nodosum (strain ATCC 35602 / DSM 5306 / Rt17-B1).